The chain runs to 916 residues: Protein translocase subunit SecA (916 aa).

Residues Gln87, 105 to 109, and Asp512 contribute to the ATP site; that span reads GEGKT. The disordered stretch occupies residues 857–916; that stretch reads QHAEAPSMEQAVAGEEEELPEGPAPVVPLEPVRNEQKIGRNEPCPCGSGKKYKHCHGQLD. Cys900, Cys902, Cys911, and His912 together coordinate Zn(2+). Over residues 906–916 the composition is skewed to basic residues; that stretch reads KKYKHCHGQLD.

Belongs to the SecA family. In terms of assembly, monomer and homodimer. Part of the essential Sec protein translocation apparatus which comprises SecA, SecYEG and auxiliary proteins SecDF-YajC and YidC. Zn(2+) is required as a cofactor.

It localises to the cell inner membrane. The protein localises to the cytoplasm. It catalyses the reaction ATP + H2O + cellular proteinSide 1 = ADP + phosphate + cellular proteinSide 2.. Part of the Sec protein translocase complex. Interacts with the SecYEG preprotein conducting channel. Has a central role in coupling the hydrolysis of ATP to the transfer of proteins into and across the cell membrane, serving both as a receptor for the preprotein-SecB complex and as an ATP-driven molecular motor driving the stepwise translocation of polypeptide chains across the membrane. This is Protein translocase subunit SecA from Pseudomonas aeruginosa (strain UCBPP-PA14).